We begin with the raw amino-acid sequence, 363 residues long: Heat-inducible transcription repressor HrcA (363 aa).

It belongs to the HrcA family.

In terms of biological role, negative regulator of class I heat shock genes (grpE-dnaK-dnaJ and groELS operons). Prevents heat-shock induction of these operons. The polypeptide is Heat-inducible transcription repressor HrcA (Afipia carboxidovorans (strain ATCC 49405 / DSM 1227 / KCTC 32145 / OM5) (Oligotropha carboxidovorans)).